The sequence spans 247 residues: tRNA (guanine-N(1)-)-methyltransferase (247 aa).

S-adenosyl-L-methionine-binding positions include G116 and 135–140; that span reads IGDYVL.

This sequence belongs to the RNA methyltransferase TrmD family. In terms of assembly, homodimer.

The protein resides in the cytoplasm. It carries out the reaction guanosine(37) in tRNA + S-adenosyl-L-methionine = N(1)-methylguanosine(37) in tRNA + S-adenosyl-L-homocysteine + H(+). Functionally, specifically methylates guanosine-37 in various tRNAs. The polypeptide is tRNA (guanine-N(1)-)-methyltransferase (Symbiobacterium thermophilum (strain DSM 24528 / JCM 14929 / IAM 14863 / T)).